A 481-amino-acid chain; its full sequence is WASH complex subunit 1 (481 aa).

Positions 1 to 54 are required for WASH complex assembly; it reads MVRMTQKRYLEGQVYSVPLIQPDLRREEAVHQITDALQYLEMISTDIFTRVSES. Disordered stretches follow at residues 273 to 417 and 429 to 481; these read SVPA…SGGD and RRKG…DWEA. Residues 304-341 show a composition bias toward pro residues; that stretch reads APPPPPPPPPPPPEPTHVPVPPPGTSAAPPPPPPPPPM. Positions 359 to 481 are VCA; the sequence is KGAPSEVVQP…AADDEDDWEA (123 aa). The region spanning 371 to 393 is the WH2 domain; sequence GRASLLESIRNAGGIGKANLRNV. Basic and acidic residues predominate over residues 392-407; it reads NVKERKMEKKKQKEQE.

It belongs to the WASH1 family. As to quaternary structure, component of the WASH complex.

The protein localises to the early endosome membrane. It localises to the recycling endosome membrane. Functionally, acts as a nucleation-promoting factor at the surface of endosomes, where it recruits and activates the Arp2/3 complex to induce actin polymerization, playing a key role in the fission of tubules that serve as transport intermediates during endosome sorting. This Danio rerio (Zebrafish) protein is WASH complex subunit 1.